The chain runs to 459 residues: Trigger factor (459 aa).

Residues glycine 161–proline 246 enclose the PPIase FKBP-type domain.

It belongs to the FKBP-type PPIase family. Tig subfamily.

The protein localises to the cytoplasm. The catalysed reaction is [protein]-peptidylproline (omega=180) = [protein]-peptidylproline (omega=0). In terms of biological role, involved in protein export. Acts as a chaperone by maintaining the newly synthesized protein in an open conformation. Functions as a peptidyl-prolyl cis-trans isomerase. The chain is Trigger factor from Legionella pneumophila (strain Corby).